A 194-amino-acid polypeptide reads, in one-letter code: ATP-dependent Clp protease proteolytic subunit (194 aa).

The active-site Nucleophile is S97. H122 is an active-site residue.

This sequence belongs to the peptidase S14 family. In terms of assembly, fourteen ClpP subunits assemble into 2 heptameric rings which stack back to back to give a disk-like structure with a central cavity, resembling the structure of eukaryotic proteasomes.

Its subcellular location is the cytoplasm. The catalysed reaction is Hydrolysis of proteins to small peptides in the presence of ATP and magnesium. alpha-casein is the usual test substrate. In the absence of ATP, only oligopeptides shorter than five residues are hydrolyzed (such as succinyl-Leu-Tyr-|-NHMec, and Leu-Tyr-Leu-|-Tyr-Trp, in which cleavage of the -Tyr-|-Leu- and -Tyr-|-Trp bonds also occurs).. Functionally, cleaves peptides in various proteins in a process that requires ATP hydrolysis. Has a chymotrypsin-like activity. Plays a major role in the degradation of misfolded proteins. This Lactobacillus helveticus (strain DPC 4571) protein is ATP-dependent Clp protease proteolytic subunit.